Consider the following 940-residue polypeptide: Valine--tRNA ligase (940 aa).

The short motif at Pro-47–His-57 is the 'HIGH' region element. Positions Lys-564–Ser-568 match the 'KMSKS' region motif. Lys-567 serves as a coordination point for ATP. Residues Pro-872 to Ser-938 are a coiled coil.

The protein belongs to the class-I aminoacyl-tRNA synthetase family. ValS type 1 subfamily. In terms of assembly, monomer.

Its subcellular location is the cytoplasm. It catalyses the reaction tRNA(Val) + L-valine + ATP = L-valyl-tRNA(Val) + AMP + diphosphate. Its function is as follows. Catalyzes the attachment of valine to tRNA(Val). As ValRS can inadvertently accommodate and process structurally similar amino acids such as threonine, to avoid such errors, it has a 'posttransfer' editing activity that hydrolyzes mischarged Thr-tRNA(Val) in a tRNA-dependent manner. This Chlamydia caviae (strain ATCC VR-813 / DSM 19441 / 03DC25 / GPIC) (Chlamydophila caviae) protein is Valine--tRNA ligase.